A 409-amino-acid chain; its full sequence is Glutamate--tRNA ligase 2 (409 aa).

Positions 9–19 (PSPTGNLHIGG) match the 'HIGH' region motif. The 'KMSKS' region motif lies at 198–202 (KLSKR). Position 201 (lysine 201) interacts with ATP.

It belongs to the class-I aminoacyl-tRNA synthetase family. Glutamate--tRNA ligase type 1 subfamily. Monomer.

It is found in the cytoplasm. The enzyme catalyses tRNA(Glu) + L-glutamate + ATP = L-glutamyl-tRNA(Glu) + AMP + diphosphate. Catalyzes the attachment of glutamate to tRNA(Glu) in a two-step reaction: glutamate is first activated by ATP to form Glu-AMP and then transferred to the acceptor end of tRNA(Glu). The protein is Glutamate--tRNA ligase 2 of Neorickettsia sennetsu (strain ATCC VR-367 / Miyayama) (Ehrlichia sennetsu).